The sequence spans 418 residues: Methionine aminopeptidase 2 (418 aa).

The disordered stretch occupies residues 18–49 (VSEPAAVDDSEVTEDATVQDKKKKKKKKKKKG). Over residues 38–49 (KKKKKKKKKKKG) the composition is skewed to basic residues. Residue histidine 172 coordinates substrate. Positions 192, 203, and 272 each coordinate a divalent metal cation. Position 280 (histidine 280) interacts with substrate. A divalent metal cation-binding residues include glutamate 305 and glutamate 399.

It belongs to the peptidase M24A family. Methionine aminopeptidase eukaryotic type 2 subfamily. Co(2+) is required as a cofactor. Requires Zn(2+) as cofactor. Mn(2+) serves as cofactor. It depends on Fe(2+) as a cofactor.

It is found in the cytoplasm. It carries out the reaction Release of N-terminal amino acids, preferentially methionine, from peptides and arylamides.. Cotranslationally removes the N-terminal methionine from nascent proteins. The N-terminal methionine is often cleaved when the second residue in the primary sequence is small and uncharged (Met-Ala-, Cys, Gly, Pro, Ser, Thr, or Val). The chain is Methionine aminopeptidase 2 from Kluyveromyces lactis (strain ATCC 8585 / CBS 2359 / DSM 70799 / NBRC 1267 / NRRL Y-1140 / WM37) (Yeast).